The following is a 200-amino-acid chain: NADH-quinone oxidoreductase subunit C (200 aa).

Belongs to the complex I 30 kDa subunit family. NDH-1 is composed of 14 different subunits. Subunits NuoB, C, D, E, F, and G constitute the peripheral sector of the complex.

It is found in the cell inner membrane. The catalysed reaction is a quinone + NADH + 5 H(+)(in) = a quinol + NAD(+) + 4 H(+)(out). In terms of biological role, NDH-1 shuttles electrons from NADH, via FMN and iron-sulfur (Fe-S) centers, to quinones in the respiratory chain. The immediate electron acceptor for the enzyme in this species is believed to be ubiquinone. Couples the redox reaction to proton translocation (for every two electrons transferred, four hydrogen ions are translocated across the cytoplasmic membrane), and thus conserves the redox energy in a proton gradient. The polypeptide is NADH-quinone oxidoreductase subunit C (Burkholderia mallei (strain NCTC 10247)).